The sequence spans 1276 residues: Probable histone acetyltransferase HAC-like 3 (1276 aa).

A disordered region spans residues 391 to 421; it reads VDRAEQTSNSTVSKPTSPASDGSSGKHYPAK. Polar residues predominate over residues 396 to 413; the sequence is QTSNSTVSKPTSPASDGS. Residues 621-689 form a PHD-type zinc finger; sequence SSICGRCHHL…EYTCAKCFLK (69 aa). The CBP/p300-type HAT domain maps to 704–1130; that stretch reads ILGARELPRT…ILYHLHDSTC (427 aa). Acetyl-CoA contacts are provided by residues 827-829, 846-847, and W902; these read IDS and RT. Residues 953–973 adopt a coiled-coil conformation; sequence EAERLLEKKDDDTSQKKETQL. 2 ZZ-type zinc fingers span residues 1013 to 1076 and 1125 to 1187; these read CLQQ…EEPL and LHDS…LQDY. 16 residues coordinate Zn(2+): C1018, C1021, C1033, C1036, C1042, C1045, H1058, H1066, C1130, C1133, C1145, C1148, C1154, C1157, H1168, and H1177. Residues 1177-1260 form a TAZ-type zinc finger; that stretch reads HVLQKYTLQD…DCSAPRCRDI (84 aa).

Its subcellular location is the nucleus. The catalysed reaction is L-lysyl-[protein] + acetyl-CoA = N(6)-acetyl-L-lysyl-[protein] + CoA + H(+). Its function is as follows. Acetyltransferase enzyme. Acetylates histones, giving a specific tag for transcriptional activation. The polypeptide is Probable histone acetyltransferase HAC-like 3 (Oryza sativa subsp. japonica (Rice)).